Consider the following 360-residue polypeptide: DNA replication and repair protein RecF (360 aa).

30–37 is a binding site for ATP; the sequence is GQNGSGKT.

This sequence belongs to the RecF family.

It is found in the cytoplasm. The RecF protein is involved in DNA metabolism; it is required for DNA replication and normal SOS inducibility. RecF binds preferentially to single-stranded, linear DNA. It also seems to bind ATP. The sequence is that of DNA replication and repair protein RecF from Shewanella baltica (strain OS185).